The sequence spans 223 residues: Serine/threonine/tyrosine-interacting protein B (223 aa).

Residues 28-176 form the Tyrosine-protein phosphatase domain; sequence EMQEILPGLF…LQEYEAIYLA (149 aa).

The protein belongs to the protein-tyrosine phosphatase family. Non-receptor class subfamily.

Its function is as follows. Catalytically inactive phosphatase. This chain is Serine/threonine/tyrosine-interacting protein B (styx-b), found in Xenopus laevis (African clawed frog).